The chain runs to 183 residues: Adenine phosphoribosyltransferase (183 aa).

The protein belongs to the purine/pyrimidine phosphoribosyltransferase family. In terms of assembly, homodimer.

It is found in the cytoplasm. The catalysed reaction is AMP + diphosphate = 5-phospho-alpha-D-ribose 1-diphosphate + adenine. It participates in purine metabolism; AMP biosynthesis via salvage pathway; AMP from adenine: step 1/1. Catalyzes a salvage reaction resulting in the formation of AMP, that is energically less costly than de novo synthesis. This is Adenine phosphoribosyltransferase from Edwardsiella ictaluri (strain 93-146).